A 333-amino-acid chain; its full sequence is L-lactate dehydrogenase (333 aa).

NAD(+) is bound by residues 29-57 (GQVG…VADK) and arginine 99. Residues arginine 106, asparagine 138, and arginine 169 each contribute to the substrate site. NAD(+) is bound at residue asparagine 138. Histidine 193 (proton acceptor) is an active-site residue. Residue threonine 249 coordinates substrate.

This sequence belongs to the LDH/MDH superfamily. LDH family. As to quaternary structure, homotetramer.

It localises to the cytoplasm. It catalyses the reaction (S)-lactate + NAD(+) = pyruvate + NADH + H(+). Its pathway is fermentation; pyruvate fermentation to lactate; (S)-lactate from pyruvate: step 1/1. The sequence is that of L-lactate dehydrogenase (ldh-1) from Caenorhabditis elegans.